A 207-amino-acid chain; its full sequence is Ras-related protein rab7 (207 aa).

GTP contacts are provided by residues 15–22 (GDSGVGKT), 34–40 (SNQYKAT), 63–67 (DTAGQ), 125–128 (NKID), and 156–157 (AK). Residues 37-45 (YKATIGADF) carry the Effector region motif. Residues Cys205 and Cys207 are each lipidated (S-geranylgeranyl cysteine). Cys207 bears the Cysteine methyl ester mark.

Belongs to the small GTPase superfamily. Rab family. (Microbial infection) Interacts with Singapore grouper iridoviral proteins VP69 (ORF69) and VP101 (ORF101). Ubiquitously expressed. Expressed in liver, spleen, kidney, brain, intestine, heart, skin, muscle, gill and stomach.

The protein resides in the late endosome membrane. The protein localises to the lysosome membrane. Key regulator in endo-lysosomal trafficking. Governs early-to-late endosomal maturation, microtubule minus-end as well as plus-end directed endosomal migration and positioning, and endosome-lysosome transport through different protein-protein interaction cascades. Plays important roles in microbial pathogen infection and survival, as well as in participating in the life cycle of viruses. In Epinephelus coioides (Orange-spotted grouper), this protein is Ras-related protein rab7.